The chain runs to 262 residues: 4-hydroxy-tetrahydrodipicolinate reductase (262 aa).

Position 9-14 (9-14) interacts with NAD(+); sequence GCLGRM. Position 36 (Arg36) interacts with NADP(+). NAD(+) is bound by residues 100-102 and 121-124; these read GTT and SANM. His154 (proton donor/acceptor) is an active-site residue. (S)-2,3,4,5-tetrahydrodipicolinate is bound at residue His155. The Proton donor role is filled by Lys158. Residue 164 to 165 coordinates (S)-2,3,4,5-tetrahydrodipicolinate; the sequence is GT.

The protein belongs to the DapB family.

The protein localises to the cytoplasm. The catalysed reaction is (S)-2,3,4,5-tetrahydrodipicolinate + NAD(+) + H2O = (2S,4S)-4-hydroxy-2,3,4,5-tetrahydrodipicolinate + NADH + H(+). The enzyme catalyses (S)-2,3,4,5-tetrahydrodipicolinate + NADP(+) + H2O = (2S,4S)-4-hydroxy-2,3,4,5-tetrahydrodipicolinate + NADPH + H(+). It participates in amino-acid biosynthesis; L-lysine biosynthesis via DAP pathway; (S)-tetrahydrodipicolinate from L-aspartate: step 4/4. Its function is as follows. Catalyzes the conversion of 4-hydroxy-tetrahydrodipicolinate (HTPA) to tetrahydrodipicolinate. This is 4-hydroxy-tetrahydrodipicolinate reductase from Wolbachia pipientis subsp. Culex pipiens (strain wPip).